Reading from the N-terminus, the 111-residue chain is HTH-type transcriptional regulator SinR (111 aa).

An HTH cro/C1-type domain is found at 6-61; it reads IKQYRKEKGYSLSELAEKAGVAKSYLSSIERNLQTNPSIQFLEKVSAVLDVSVHTL. The H-T-H motif DNA-binding region spans 17-36; sequence LSELAEKAGVAKSYLSSIER. Residues 65–103 form the Sin domain; sequence KHETEYDGQLDSEWEKLVRDAMTSGVSKKQFREFLDYQK.

As to quaternary structure, homotetramer in the absence of SinI. Heterodimer with SinI. Interaction with SinI disrupts the SinR tetramer and its repressor activity. Interacts with hpr.

Negative as well as positive regulator of alternate developmental processes that are induced at the end of vegetative growth in response to nutrient depletion. Binds to the alkaline protease (aprE) gene at two sites. Also acts as a repressor of the key sporulation gene spo0A. Negatively regulates transcription of the eps operon, which is responsible for the biosynthesis of an exopolysaccharide involved in biofilm formation; therefore it could govern the transition between a state in which bacteria swim or swarm and a state in which bacteria assemble into multicellular communities. Acts with Hpr as a corepressor of epr expression. Also negatively regulates transcription of the lutABC operon, which is required for lactate utilization. Repressor activity is regulated by SinI. The protein is HTH-type transcriptional regulator SinR (sinR) of Bacillus subtilis (strain 168).